A 188-amino-acid polypeptide reads, in one-letter code: UPF0301 protein PD_1276 (188 aa).

This sequence belongs to the UPF0301 (AlgH) family.

The sequence is that of UPF0301 protein PD_1276 from Xylella fastidiosa (strain Temecula1 / ATCC 700964).